The following is a 697-amino-acid chain: Potassium-transporting ATPase ATP-binding subunit (697 aa).

4 helical membrane passes run 55 to 75 (PIMF…FFPS), 79 to 99 (SIPG…VLFA), 245 to 265 (LTLI…YLGF), and 271 to 291 (VLVA…LSAI). Asp-324 acts as the 4-aspartylphosphate intermediate in catalysis. ATP contacts are provided by residues Asp-361, Glu-365, 393 to 400 (FKAETRMS), and Lys-412. 2 residues coordinate Mg(2+): Asp-535 and Asp-539. The next 3 helical transmembrane spans lie at 605 to 625 (FAII…LNIM), 633 to 653 (AILS…PLAM), and 677 to 697 (GGVI…GLFI).

It belongs to the cation transport ATPase (P-type) (TC 3.A.3) family. Type IA subfamily. In terms of assembly, the system is composed of three essential subunits: KdpA, KdpB and KdpC.

Its subcellular location is the cell membrane. It catalyses the reaction K(+)(out) + ATP + H2O = K(+)(in) + ADP + phosphate + H(+). Part of the high-affinity ATP-driven potassium transport (or Kdp) system, which catalyzes the hydrolysis of ATP coupled with the electrogenic transport of potassium into the cytoplasm. This subunit is responsible for energy coupling to the transport system and for the release of the potassium ions to the cytoplasm. The protein is Potassium-transporting ATPase ATP-binding subunit of Bacillus cereus (strain AH820).